Reading from the N-terminus, the 923-residue chain is Cell cycle and apoptosis regulator protein 2 (923 aa).

The tract at residues 1–35 is disordered; that stretch reads MSQFKRQRINPLPGGRNFSGTASTSLLGPPPGLLT. At T35 the chain carries Phosphothreonine. At K112 the chain carries N6-acetyllysine; by KAT8. An N6-methyllysine modification is found at K123. A Phosphoserine modification is found at S124. Disordered regions lie at residues 178 to 218, 446 to 510, and 568 to 643; these read LNRF…KKPR, KAAE…PAVI, and VSPP…SEDL. Residue R180 is modified to Omega-N-methylarginine. The span at 188 to 200 shows a compositional bias: basic and acidic residues; it reads GRLDQGRSDDYDS. K215 is modified (N6-acetyllysine; by KAT8). Low complexity predominate over residues 446–458; sequence KAAEAAPPTQEAQ. Residue T454 is modified to Phosphothreonine; by ATM, ATR and CK2. T484 carries the post-translational modification Phosphothreonine. S569 bears the Phosphoserine mark. The segment covering 572–602 has biased composition (basic and acidic residues); that stretch reads EPEKEEAAKEEATKEEEAIKEEVVKEPKDEA. Residue K591 forms a Glycyl lysine isopeptide (Lys-Gly) (interchain with G-Cter in SUMO2 and SUMO3); alternate linkage. A Glycyl lysine isopeptide (Lys-Gly) (interchain with G-Cter in SUMO2); alternate cross-link involves residue K591. The interaction with MCC stretch occupies residues 610 to 670; the sequence is ESEAPLKEDG…EEFAGAKLED (61 aa). Phosphoserine is present on residues S627, S675, S678, S681, S687, and S808. Positions 704–923 are interaction with NR1D1; sequence DCLLAFVFFD…VEKEEPAPSN (220 aa). Positions 829–909 form a coiled coil; it reads LENKIHTLEL…QLEIQRVVEK (81 aa). T897 is modified (phosphothreonine).

Component of the DBIRD complex. Interacts with ZNF326/ZIRD; the interaction is direct. Interacts (via N-terminus) with SIRT1, which inhibits the deacetylation of substrates. Interacts (via N-terminus) with SUV39H1; this interaction abolishes the interaction with SIRT1. Component of a nuclear receptor-mediated transcription complex composed of at least ZNF335, CCAR2 and EMSY; the complex stimulates the transcription of nuclear receptor target genes such as SOX9 and HOXA1. Within the complex interacts with EMSY and interacts with ZNF335 (via C-terminus). Components of this complex may associate with components of a histone methylation complex to form a complex at least composed of ZNF335, HCFC1, CCAR2, EMSY, MKI67, RBBP5, ASH2L and WDR5. Within this complex, interacts with ASH2L. Interacts with NR1D1. Interacts (via N-terminus) with ESR1 and ESR2. Interacts (via N-terminus) with HDAC3 (via C-terminus). Interacts with HDAC1 and MED2F. Interacts with MCC. Interacts (via N-terminus) with NR1H2 and NR1H3 in a ligand-independent manner. Interacts with CSNK2A1. Interacts (via N-terminus) with p53/TP53. Interacts (via N-terminus) with BRCA1 (via the BRCT domains). Interacts (via N-terminus) with CHEK2 (via protein kinase domain). Interacts with PSEM3. Interacts (via N-terminus) with PSIA3 and SENP1. The sumoylated form shows a preferential interaction with SIRT1 as compared to its unmodified form. Interacts with CECR2; may form part of the CERF-1 and/or CEF-5 ISWI chromatin remodeling complexes in embryonic stem cells. ATM/ATR-mediated phosphorylation at Thr-454 upon DNA damage promotes binding to SIRT1. Phosphorylation at Thr-454 promotes its sumoylation by switching the binding partner of CCAR2 from SENP1 to PIAS3. Post-translationally, acetylation at Lys-112 and Lys-215 by KAT8 prevents inhibitory binding to SIRT1 and increases its deacetylase activity. In terms of processing, genotoxic stress induces its sumoylation and sumoylation promotes the SIRT1-CCAR2 interaction which in turn inhibits SIRT1-mediated deacetylation of p53/TP53. Sumoylation leads to transcriptional activation of p53/TP53 by sequestering SIRT1 from p53/TP53. Desumoylated by SENP1. Expressed in gastric carcinoma tissue and the expression gradually increases with the progression of the carcinoma (at protein level). Expressed ubiquitously in normal tissues. Expressed in 84 to 100% of neoplastic breast, lung, and colon tissues.

Its subcellular location is the nucleus. The protein resides in the cytoplasm. The protein localises to the cytoskeleton. It is found in the spindle. Core component of the DBIRD complex, a multiprotein complex that acts at the interface between core mRNP particles and RNA polymerase II (RNAPII) and integrates transcript elongation with the regulation of alternative splicing: the DBIRD complex affects local transcript elongation rates and alternative splicing of a large set of exons embedded in (A + T)-rich DNA regions. Inhibits SIRT1 deacetylase activity leading to increasing levels of p53/TP53 acetylation and p53-mediated apoptosis. Inhibits SUV39H1 methyltransferase activity. Mediates ligand-dependent transcriptional activation by nuclear hormone receptors. Plays a critical role in maintaining genomic stability and cellular integrity following UV-induced genotoxic stress. Regulates the circadian expression of the core clock components NR1D1 and BMAL1. Enhances the transcriptional repressor activity of NR1D1 through stabilization of NR1D1 protein levels by preventing its ubiquitination and subsequent degradation. Represses the ligand-dependent transcriptional activation function of ESR2. Acts as a regulator of PCK1 expression and gluconeogenesis by a mechanism that involves, at least in part, both NR1D1 and SIRT1. Negatively regulates the deacetylase activity of HDAC3 and can alter its subcellular localization. Positively regulates the beta-catenin pathway (canonical Wnt signaling pathway) and is required for MCC-mediated repression of the beta-catenin pathway. Represses ligand-dependent transcriptional activation function of NR1H2 and NR1H3 and inhibits the interaction of SIRT1 with NR1H3. Plays an important role in tumor suppression through p53/TP53 regulation; stabilizes p53/TP53 by affecting its interaction with ubiquitin ligase MDM2. Represses the transcriptional activator activity of BRCA1. Inhibits SIRT1 in a CHEK2 and PSEM3-dependent manner and inhibits the activity of CHEK2 in vitro. The sequence is that of Cell cycle and apoptosis regulator protein 2 (CCAR2) from Homo sapiens (Human).